The primary structure comprises 366 residues: D-alanine--D-alanine ligase (366 aa).

The ATP-grasp domain maps to 150 to 353; sequence KRVLRDAGVP…YPALVDRLIV (204 aa). 180–235 contributes to the ATP binding site; it reads IGQLGLPLFIKPASQGSSVGVSKVTDRAGFAAALALAFRYDAKVLVEQGISGREIE. Residues Asp307, Glu320, and Asn322 each contribute to the Mg(2+) site.

It belongs to the D-alanine--D-alanine ligase family. Requires Mg(2+) as cofactor. Mn(2+) serves as cofactor.

The protein localises to the cytoplasm. It catalyses the reaction 2 D-alanine + ATP = D-alanyl-D-alanine + ADP + phosphate + H(+). It participates in cell wall biogenesis; peptidoglycan biosynthesis. In terms of biological role, cell wall formation. The chain is D-alanine--D-alanine ligase from Sodalis glossinidius (strain morsitans).